Consider the following 1527-residue polypeptide: uncharacterized protein (1527 aa).

Coiled coils occupy residues 262-293 (NVEISRDKIKKLKDKNEIFNQLINEFGENINE), 699-751 (QQQQ…SEKL), 905-932 (NNLNIINNNQENNNNNNNDLKETIENQI), and 1217-1255 (KIISSELELEQQQQQQQQQQQQQQQQQQQQQQQQQQKSS). The tract at residues 683-734 (TNQEQEQDQQDQPPPPQQQQEQQQEQQQQQEQQQQQDQQQQDQQQDQQEKQQ) is disordered. Over residues 700–728 (QQQEQQQEQQQQQEQQQQQDQQQQDQQQD) the composition is skewed to low complexity.

This is an uncharacterized protein from Dictyostelium discoideum (Social amoeba).